An 87-amino-acid chain; its full sequence is Protein anon-73B1 (87 aa).

Residues 25–47 traverse the membrane as a helical segment; it reads LLIRYGLYVGALFQFVCISAAVL. Residues 51 to 87 form a disordered region; the sequence is NPDGQSNPESGEVTEREGEPVRTRLHKIRKLEKKKRR. Residues 63 to 72 are compositionally biased toward basic and acidic residues; it reads VTEREGEPVR. The segment covering 73-87 has biased composition (basic residues); sequence TRLHKIRKLEKKKRR.

Belongs to the UPF0239 family.

It localises to the membrane. In Drosophila melanogaster (Fruit fly), this protein is Protein anon-73B1 (anon-73B1).